Consider the following 316-residue polypeptide: N-acetyl-gamma-glutamyl-phosphate reductase (316 aa).

C136 is a catalytic residue.

Belongs to the NAGSA dehydrogenase family. Type 1 subfamily.

Its subcellular location is the cytoplasm. It catalyses the reaction N-acetyl-L-glutamate 5-semialdehyde + phosphate + NADP(+) = N-acetyl-L-glutamyl 5-phosphate + NADPH + H(+). It participates in amino-acid biosynthesis; L-arginine biosynthesis; N(2)-acetyl-L-ornithine from L-glutamate: step 3/4. In terms of biological role, catalyzes the NADPH-dependent reduction of N-acetyl-5-glutamyl phosphate to yield N-acetyl-L-glutamate 5-semialdehyde. In Xanthomonas campestris pv. campestris (strain ATCC 33913 / DSM 3586 / NCPPB 528 / LMG 568 / P 25), this protein is N-acetyl-gamma-glutamyl-phosphate reductase.